The primary structure comprises 106 residues: uncharacterized protein (106 aa).

This is an uncharacterized protein from Sinorhizobium fredii (strain NBRC 101917 / NGR234).